A 552-amino-acid chain; its full sequence is Phosphoglucomutase (552 aa).

Catalysis depends on S135, which acts as the Phosphoserine intermediate. Residues S135, D289, D291, and D293 each contribute to the Mg(2+) site.

The protein belongs to the phosphohexose mutase family. Mg(2+) is required as a cofactor.

The enzyme catalyses alpha-D-glucose 1-phosphate = alpha-D-glucose 6-phosphate. It participates in glycolipid metabolism; diglucosyl-diacylglycerol biosynthesis. Catalyzes the interconversion between glucose-6-phosphate and alpha-glucose-1-phosphate. This is the first step in the biosynthesis of diglucosyl-diacylglycerol (Glc2-DAG), i.e. a glycolipid found in the membrane, which is also used as a membrane anchor for lipoteichoic acid (LTA). This Staphylococcus saprophyticus subsp. saprophyticus (strain ATCC 15305 / DSM 20229 / NCIMB 8711 / NCTC 7292 / S-41) protein is Phosphoglucomutase (pgcA).